Consider the following 71-residue polypeptide: Protein CYSTEINE-RICH TRANSMEMBRANE MODULE 4 (71 aa).

The span at 1 to 12 shows a compositional bias: polar residues; sequence MSQYSQNQSSGA. Positions 1 to 31 are disordered; sequence MSQYSQNQSSGAYPTPPVSTGPYMTPPPLGY. The span at 14–30 shows a compositional bias: pro residues; sequence PTPPVSTGPYMTPPPLG. A helical transmembrane segment spans residues 48–64; the sequence is SKGDGFLKGCLAAMCCC.

This sequence belongs to the CYSTM1 family. Heterodimers. Interacts with CYSTM6, CYSTM7, CYSTM12 and WIH1/CYSTM13. In terms of tissue distribution, mostly expressed in roots, stems, rosette leaves and siliques and, to a lower extent, in flowers and cauline leaves.

It is found in the cell membrane. The protein resides in the cytoplasm. Its function is as follows. Involved in resistance to abiotic stress. The chain is Protein CYSTEINE-RICH TRANSMEMBRANE MODULE 4 from Arabidopsis thaliana (Mouse-ear cress).